Consider the following 149-residue polypeptide: Lipoprotein signal peptidase (149 aa).

3 helical membrane passes run 24 to 44 (SHIALGASTSIVTGLLSLTNL), 57 to 77 (KMWFFYLISVIALIVMGYLLW), and 81 to 101 (GKWLYEVGISLMIAGTLGNFI). Catalysis depends on residues aspartate 111 and aspartate 127. Residues 122-142 (IFNFADSCLTVGVIFILIGVL) form a helical membrane-spanning segment.

The protein belongs to the peptidase A8 family.

The protein resides in the cell membrane. It catalyses the reaction Release of signal peptides from bacterial membrane prolipoproteins. Hydrolyzes -Xaa-Yaa-Zaa-|-(S,diacylglyceryl)Cys-, in which Xaa is hydrophobic (preferably Leu), and Yaa (Ala or Ser) and Zaa (Gly or Ala) have small, neutral side chains.. It functions in the pathway protein modification; lipoprotein biosynthesis (signal peptide cleavage). Functionally, this protein specifically catalyzes the removal of signal peptides from prolipoproteins. This chain is Lipoprotein signal peptidase, found in Lactiplantibacillus plantarum (strain ATCC BAA-793 / NCIMB 8826 / WCFS1) (Lactobacillus plantarum).